A 200-amino-acid chain; its full sequence is ATP-dependent Clp protease proteolytic subunit (200 aa).

Ser-96 functions as the Nucleophile in the catalytic mechanism. His-121 is an active-site residue.

It belongs to the peptidase S14 family. As to quaternary structure, fourteen ClpP subunits assemble into 2 heptameric rings which stack back to back to give a disk-like structure with a central cavity, resembling the structure of eukaryotic proteasomes.

The protein resides in the cytoplasm. The enzyme catalyses Hydrolysis of proteins to small peptides in the presence of ATP and magnesium. alpha-casein is the usual test substrate. In the absence of ATP, only oligopeptides shorter than five residues are hydrolyzed (such as succinyl-Leu-Tyr-|-NHMec, and Leu-Tyr-Leu-|-Tyr-Trp, in which cleavage of the -Tyr-|-Leu- and -Tyr-|-Trp bonds also occurs).. Functionally, cleaves peptides in various proteins in a process that requires ATP hydrolysis. Has a chymotrypsin-like activity. Plays a major role in the degradation of misfolded proteins. The sequence is that of ATP-dependent Clp protease proteolytic subunit from Leuconostoc citreum (strain KM20).